A 217-amino-acid chain; its full sequence is Cytochrome c biogenesis ATP-binding export protein CcmA (217 aa).

Positions 16–214 (LVLEQLSCER…AHGQAEVTEG (199 aa)) constitute an ABC transporter domain. Residue 48 to 55 (GANGAGKT) coordinates ATP.

It belongs to the ABC transporter superfamily. CcmA exporter (TC 3.A.1.107) family. As to quaternary structure, the complex is composed of two ATP-binding proteins (CcmA) and two transmembrane proteins (CcmB).

Its subcellular location is the cell inner membrane. The catalysed reaction is heme b(in) + ATP + H2O = heme b(out) + ADP + phosphate + H(+). Its function is as follows. Part of the ABC transporter complex CcmAB involved in the biogenesis of c-type cytochromes; once thought to export heme, this seems not to be the case, but its exact role is uncertain. Responsible for energy coupling to the transport system. This is Cytochrome c biogenesis ATP-binding export protein CcmA from Alcanivorax borkumensis (strain ATCC 700651 / DSM 11573 / NCIMB 13689 / SK2).